A 104-amino-acid chain; its full sequence is Ig lambda-2 chain C region (104 aa).

The region spanning 6 to 99 (PTLTVFPPSS…EGDTVEKSLS (94 aa)) is the Ig-like domain. C27 and C85 are joined by a disulfide.

The polypeptide is Ig lambda-2 chain C region (Iglc2) (Mus musculus (Mouse)).